We begin with the raw amino-acid sequence, 211 residues long: Protein GrpE (211 aa).

Residues 1-10 are compositionally biased toward basic and acidic residues; sequence MTDDTKKPGP. 2 disordered regions span residues 1 to 37 and 187 to 211; these read MTDD…PDPV and AKGG…EKDA. Acidic residues predominate over residues 27-36; that stretch reads EQAETAEPDP. A compositionally biased stretch (polar residues) spans 201-211; sequence PGTSSLNEKDA.

The protein belongs to the GrpE family. In terms of assembly, homodimer.

The protein resides in the cytoplasm. Its function is as follows. Participates actively in the response to hyperosmotic and heat shock by preventing the aggregation of stress-denatured proteins, in association with DnaK and GrpE. It is the nucleotide exchange factor for DnaK and may function as a thermosensor. Unfolded proteins bind initially to DnaJ; upon interaction with the DnaJ-bound protein, DnaK hydrolyzes its bound ATP, resulting in the formation of a stable complex. GrpE releases ADP from DnaK; ATP binding to DnaK triggers the release of the substrate protein, thus completing the reaction cycle. Several rounds of ATP-dependent interactions between DnaJ, DnaK and GrpE are required for fully efficient folding. In Agrobacterium fabrum (strain C58 / ATCC 33970) (Agrobacterium tumefaciens (strain C58)), this protein is Protein GrpE.